A 157-amino-acid chain; its full sequence is MASGDFRLCDVVLDDSIGRSTPDVEHERAVAIFDLIEENTFEPAGHDGGPYRLHISLVDAKLVFAIKTEDDKDVSTHILSLTPFRRIIKDYFLICESYYEAIRSSTPSQIEAIDMGRRGIHNDGSQTLMDRLSGKIKVDFDTARRLFTLVCVLYWRG.

This sequence belongs to the UPF0262 family.

The sequence is that of UPF0262 protein Atu0536 from Agrobacterium fabrum (strain C58 / ATCC 33970) (Agrobacterium tumefaciens (strain C58)).